A 430-amino-acid polypeptide reads, in one-letter code: Enolase (430 aa).

Gln-163 provides a ligand contact to (2R)-2-phosphoglycerate. Residue Glu-205 is the Proton donor of the active site. Mg(2+) is bound by residues Asp-242, Glu-285, and Asp-312. Residues Lys-337, Arg-366, Ser-367, and Lys-388 each contribute to the (2R)-2-phosphoglycerate site. Residue Lys-337 is the Proton acceptor of the active site.

Belongs to the enolase family. The cofactor is Mg(2+).

It localises to the cytoplasm. The protein localises to the secreted. The protein resides in the cell surface. The enzyme catalyses (2R)-2-phosphoglycerate = phosphoenolpyruvate + H2O. Its pathway is carbohydrate degradation; glycolysis; pyruvate from D-glyceraldehyde 3-phosphate: step 4/5. Its function is as follows. Catalyzes the reversible conversion of 2-phosphoglycerate (2-PG) into phosphoenolpyruvate (PEP). It is essential for the degradation of carbohydrates via glycolysis. This is Enolase from Bifidobacterium animalis subsp. lactis (strain AD011).